A 157-amino-acid polypeptide reads, in one-letter code: Transcription elongation factor GreA (157 aa).

Residues 47-75 (SGEYEDAKKAQALLEGRIRELKHLLSRAE) are a coiled coil.

This sequence belongs to the GreA/GreB family.

Functionally, necessary for efficient RNA polymerase transcription elongation past template-encoded arresting sites. The arresting sites in DNA have the property of trapping a certain fraction of elongating RNA polymerases that pass through, resulting in locked ternary complexes. Cleavage of the nascent transcript by cleavage factors such as GreA or GreB allows the resumption of elongation from the new 3'terminus. GreA releases sequences of 2 to 3 nucleotides. This Chloroflexus aurantiacus (strain ATCC 29366 / DSM 635 / J-10-fl) protein is Transcription elongation factor GreA.